Consider the following 189-residue polypeptide: Apolipophorin-3 (189 aa).

The signal sequence occupies residues 1-18; the sequence is MAAKFVVVLAACVALSHS. Positions 19 to 23 are excised as a propeptide; that stretch reads AMVRR.

The protein belongs to the insect apolipophorin-3 family. Equilibrium between a soluble monomer and a bound lipoprotein form. Apolipophorin-3 associates with lipophorin during lipid loading until each particle contains 9 or 14 molecules of apolipophorin-3. Hemolymph.

The protein localises to the secreted. Assists in the loading of diacylglycerol, generated from triacylglycerol stores in the fat body through the action of adipokinetic hormone, into lipophorin, the hemolymph lipoprotein. It increases the lipid carrying capacity of lipophorin by covering the expanding hydrophobic surface resulting from diacylglycerol uptake. It thus plays a critical role in the transport of lipids during flight in several species of insects. The protein is Apolipophorin-3 of Manduca sexta (Tobacco hawkmoth).